The primary structure comprises 192 residues: Transcription termination/antitermination protein NusG (192 aa).

In terms of domain architecture, KOW spans 140–168 (VGEIVIVTDGPFETFTGTVEEIDQEKNRL).

Belongs to the NusG family.

In terms of biological role, participates in transcription elongation, termination and antitermination. The protein is Transcription termination/antitermination protein NusG of Rickettsia felis (strain ATCC VR-1525 / URRWXCal2) (Rickettsia azadi).